Reading from the N-terminus, the 513-residue chain is GMP synthase [glutamine-hydrolyzing] (513 aa).

Residues 9 to 198 (MILVLDFGSQ…VRRICDCTGE (190 aa)) form the Glutamine amidotransferase type-1 domain. The active-site Nucleophile is cysteine 86. Residues histidine 172 and glutamate 174 contribute to the active site. The region spanning 199-388 (WTMENFIDLE…LGIPEHLVWR (190 aa)) is the GMPS ATP-PPase domain. Residue 226–232 (SGGVDSS) participates in ATP binding.

As to quaternary structure, homodimer.

The enzyme catalyses XMP + L-glutamine + ATP + H2O = GMP + L-glutamate + AMP + diphosphate + 2 H(+). Its pathway is purine metabolism; GMP biosynthesis; GMP from XMP (L-Gln route): step 1/1. Functionally, catalyzes the synthesis of GMP from XMP. In Staphylococcus carnosus (strain TM300), this protein is GMP synthase [glutamine-hydrolyzing].